Consider the following 372-residue polypeptide: Oxoglutarate-dependent flavonoid 7-O-demethylase 1 (372 aa).

A Fe2OG dioxygenase domain is found at 221–321; it reads GIQALRMNYY…RLSVAAFLNP (101 aa). Fe cation-binding residues include histidine 245, aspartate 247, and histidine 302. Residue arginine 312 participates in 2-oxoglutarate binding.

Belongs to the iron/ascorbate-dependent oxidoreductase family. Monomer. Fe(2+) serves as cofactor. The cofactor is L-ascorbate. As to expression, accumulates in the trichomes of nevadensin-accumulating strains (e.g. cv. SD and cv. EMX-1) and in cv. SW (at protein level) but not in cv. MC.

It localises to the cytoplasm. It carries out the reaction gardenin B + 2-oxoglutarate + O2 = nevadensin + formaldehyde + succinate + CO2 + H(+). The catalysed reaction is 8-hydroxysalvigenin + 2-oxoglutarate + O2 = pilosin + formaldehyde + succinate + CO2. The protein operates within flavonoid metabolism. Inhibited by prohexadione-calcium, a 2-oxoglutarate-dependent dioxygenase (2-ODD) inhibitor, thus leading to a decreased abundance of nevadensin (NEV) and absence of pilosin (PIL) production, but to the accumulation of gardenin B (GARD B) and 8-hydroxysalvigenin (8-OH-SALV). Oxoglutarate-dependent dioxygenase (2-ODD) acting as a flavonoid 7-O-demethylase involved in the biosynthesis of polymethoxylated flavonoids natural products such as nevadensin and salvigenin, aroma compounds which contribute to the flavor of sweet basil, and exhibit pharmacological activities such as anti-allergic, anti-oxidant, antibacterial, anti-proliferative, and anti-inflammatory effects. Catalyzes the 7-O-demethylation of methoxylated flavones; mediates the conversion of 8-hydroxysalvigenin (8-OH-SALV) to pilosin (PIL) and of gardenin B (GARD B) to nevadensin (NEV). This is Oxoglutarate-dependent flavonoid 7-O-demethylase 1 from Ocimum basilicum (Sweet basil).